We begin with the raw amino-acid sequence, 477 residues long: Cysteine protease ATG4b (477 aa).

Residues 11–39 (SKCSSSSTSEKRDISSPTSLVSDSASSDN) are disordered. Polar residues predominate over residues 25-39 (SSPTSLVSDSASSDN). Catalysis depends on C173, which acts as the Nucleophile. Active-site residues include D368 and H370. The disordered stretch occupies residues 453-477 (AETSSSTETSTEISGEEHEDDWQLL). Residues 454 to 465 (ETSSSTETSTEI) are compositionally biased toward low complexity.

The protein belongs to the peptidase C54 family. Interacts with ATG8a and ATG8d. In terms of tissue distribution, constitutively expressed.

Its subcellular location is the cytoplasm. The catalysed reaction is [protein]-C-terminal L-amino acid-glycyl-phosphatidylethanolamide + H2O = [protein]-C-terminal L-amino acid-glycine + a 1,2-diacyl-sn-glycero-3-phosphoethanolamine. Its function is as follows. Cysteine protease that plays a key role in autophagy by mediating both proteolytic activation and delipidation of ATG8 family proteins. The protease activity is required for proteolytic activation of ATG8 family proteins: cleaves the C-terminal amino acid of ATG8 proteins to reveal a C-terminal glycine. Exposure of the glycine at the C-terminus is essential for ATG8 proteins conjugation to phosphatidylethanolamine (PE) and insertion to membranes, which is necessary for autophagy. In addition to the protease activity, also mediates delipidation of PE-conjugated ATG8 proteins. The sequence is that of Cysteine protease ATG4b from Arabidopsis thaliana (Mouse-ear cress).